We begin with the raw amino-acid sequence, 269 residues long: Indole-3-glycerol phosphate synthase (269 aa).

The protein belongs to the TrpC family.

The catalysed reaction is 1-(2-carboxyphenylamino)-1-deoxy-D-ribulose 5-phosphate + H(+) = (1S,2R)-1-C-(indol-3-yl)glycerol 3-phosphate + CO2 + H2O. It participates in amino-acid biosynthesis; L-tryptophan biosynthesis; L-tryptophan from chorismate: step 4/5. The protein is Indole-3-glycerol phosphate synthase of Roseiflexus sp. (strain RS-1).